The sequence spans 478 residues: 2,5-dioxopentanoate dehydrogenase (478 aa).

NADP(+)-binding positions include 148 to 149, 172 to 175, and 225 to 226; these read WN, KPAT, and GS. Glu249 acts as the Proton acceptor in catalysis. The active-site Nucleophile is Cys283. Glu379 provides a ligand contact to NADP(+).

This sequence belongs to the aldehyde dehydrogenase family. Homotetramer.

It carries out the reaction 2,5-dioxopentanoate + NADP(+) + H2O = 2-oxoglutarate + NADPH + 2 H(+). In terms of biological role, 2,5-dioxopentanoate dehydrogenase involved in the degradation of pentoses such as D-arabinose or D-xylose, a major component of hemicelluloses such as xylan. Catalyzes the fifth reaction in the pentose utilization pathway through dehydratation of 2,5-dioxopentanoate into 2-oxoglutarate. Also shows dehydrogenase activity toward glycolaldehyde and DL-glyceraldehyde. The protein is 2,5-dioxopentanoate dehydrogenase of Saccharolobus solfataricus (strain ATCC 35092 / DSM 1617 / JCM 11322 / P2) (Sulfolobus solfataricus).